An 88-amino-acid chain; its full sequence is Small ribosomal subunit protein bS20 (88 aa).

Positions 1–10 (MANHKSSLKR) are enriched in basic residues. The tract at residues 1–24 (MANHKSSLKRAKQDIVRNTRNKSR) is disordered.

This sequence belongs to the bacterial ribosomal protein bS20 family.

In terms of biological role, binds directly to 16S ribosomal RNA. This is Small ribosomal subunit protein bS20 from Desulfosudis oleivorans (strain DSM 6200 / JCM 39069 / Hxd3) (Desulfococcus oleovorans).